The primary structure comprises 137 residues: MSENQDLQKSFLETVKFDDKGLVPAIVQDFETGKVLMMAWMNRQSLEMTLEKKKACYWSRSRQKLWLKGESSGNMQNVHDILIDCDGDTLLLKVSQTGGACHMGYQSCFYRKTKDDLSMEICDTLMFNPEDVYGKQS.

Aspartate 84 contributes to the Mg(2+) binding site. Residue cysteine 85 participates in Zn(2+) binding. Residues aspartate 86 and aspartate 88 each coordinate Mg(2+). Zn(2+) contacts are provided by cysteine 101 and cysteine 108.

This sequence belongs to the PRA-CH family. Homodimer. Requires Mg(2+) as cofactor. It depends on Zn(2+) as a cofactor.

The protein localises to the cytoplasm. The enzyme catalyses 1-(5-phospho-beta-D-ribosyl)-5'-AMP + H2O = 1-(5-phospho-beta-D-ribosyl)-5-[(5-phospho-beta-D-ribosylamino)methylideneamino]imidazole-4-carboxamide. Its pathway is amino-acid biosynthesis; L-histidine biosynthesis; L-histidine from 5-phospho-alpha-D-ribose 1-diphosphate: step 3/9. Its function is as follows. Catalyzes the hydrolysis of the adenine ring of phosphoribosyl-AMP. The protein is Phosphoribosyl-AMP cyclohydrolase of Prosthecochloris aestuarii (strain DSM 271 / SK 413).